The chain runs to 295 residues: Pyridoxal 5'-phosphate synthase subunit PdxS (295 aa).

Residue Asp25 participates in D-ribose 5-phosphate binding. The active-site Schiff-base intermediate with D-ribose 5-phosphate is the Lys82. A D-ribose 5-phosphate-binding site is contributed by Gly154. Arg166 is a D-glyceraldehyde 3-phosphate binding site. Residues Gly215 and 236–237 (GS) each bind D-ribose 5-phosphate.

The protein belongs to the PdxS/SNZ family. In the presence of PdxT, forms a dodecamer of heterodimers.

It catalyses the reaction aldehydo-D-ribose 5-phosphate + D-glyceraldehyde 3-phosphate + L-glutamine = pyridoxal 5'-phosphate + L-glutamate + phosphate + 3 H2O + H(+). It functions in the pathway cofactor biosynthesis; pyridoxal 5'-phosphate biosynthesis. In terms of biological role, catalyzes the formation of pyridoxal 5'-phosphate from ribose 5-phosphate (RBP), glyceraldehyde 3-phosphate (G3P) and ammonia. The ammonia is provided by the PdxT subunit. Can also use ribulose 5-phosphate and dihydroxyacetone phosphate as substrates, resulting from enzyme-catalyzed isomerization of RBP and G3P, respectively. In Listeria monocytogenes serotype 4b (strain CLIP80459), this protein is Pyridoxal 5'-phosphate synthase subunit PdxS.